A 62-amino-acid chain; its full sequence is Kininogen-1 (62 aa).

Positions methionine 1–cysteine 22 are cleaved as a signal peptide. The disordered stretch occupies residues glutamate 24–tyrosine 62. The segment covering glutamate 30–serine 42 has biased composition (acidic residues). Proline 54 is modified (4-hydroxyproline; partial). Position 62 is a sulfotyrosine (tyrosine 62).

The protein belongs to the frog skin active peptide (FSAP) family. Bradykinin-related peptide subfamily. As to expression, expressed by the skin glands.

It is found in the secreted. In terms of biological role, inhibits ACE with a Ki of 1.6 uM, and targets B2 bradykinin receptor (BDKRB2). Provokes contraction of smooth muscle preparation (ileum). In vivo, induces an early hyperalgesic effects in living rats after intraplantar injection. This Phyllomedusa sauvagei (Sauvage's leaf frog) protein is Kininogen-1.